Consider the following 234-residue polypeptide: Lactate utilization protein C 1 (234 aa).

Belongs to the LutC/YkgG family.

Its function is as follows. Is involved in L-lactate degradation and allows cells to grow with lactate as the sole carbon source. The polypeptide is Lactate utilization protein C 1 (Bacillus mycoides (strain KBAB4) (Bacillus weihenstephanensis)).